We begin with the raw amino-acid sequence, 533 residues long: D-3-phosphoglycerate dehydrogenase (533 aa).

Ala-2 carries the post-translational modification N-acetylalanine. Ser-14 carries the post-translational modification Phosphoserine. Lys-21 carries the N6-acetyllysine; alternate modification. Lys-21 is covalently cross-linked (Glycyl lysine isopeptide (Lys-Gly) (interchain with G-Cter in SUMO1); alternate). A Glycyl lysine isopeptide (Lys-Gly) (interchain with G-Cter in SUMO2); alternate cross-link involves residue Lys-21. Lys-58 bears the N6-acetyllysine mark. Residues Thr-78, 155–156 (RI), Asp-175, Thr-207, 234–236 (CAR), and Asp-260 contribute to the NAD(+) site. Thr-78 carries the phosphothreonine modification. The active site involves Arg-236. Glu-265 is an active-site residue. The active-site Proton donor is His-283. Position 283–286 (283–286 (HLGA)) interacts with NAD(+).

The protein belongs to the D-isomer specific 2-hydroxyacid dehydrogenase family. In terms of assembly, homotetramer.

The enzyme catalyses (2R)-3-phosphoglycerate + NAD(+) = 3-phosphooxypyruvate + NADH + H(+). It carries out the reaction (R)-2-hydroxyglutarate + NAD(+) = 2-oxoglutarate + NADH + H(+). The catalysed reaction is (S)-malate + NAD(+) = oxaloacetate + NADH + H(+). It functions in the pathway amino-acid biosynthesis; L-serine biosynthesis; L-serine from 3-phospho-D-glycerate: step 1/3. Catalyzes the reversible oxidation of 3-phospho-D-glycerate to 3-phosphonooxypyruvate, the first step of the phosphorylated L-serine biosynthesis pathway. Also catalyzes the reversible oxidation of 2-hydroxyglutarate to 2-oxoglutarate and the reversible oxidation of (S)-malate to oxaloacetate. The sequence is that of D-3-phosphoglycerate dehydrogenase (PHGDH) from Homo sapiens (Human).